We begin with the raw amino-acid sequence, 542 residues long: GMP synthase [glutamine-hydrolyzing] (542 aa).

A Glutamine amidotransferase type-1 domain is found at 28–218; that stretch reads MLVILDFGSQ…VYHICQCEPT (191 aa). C105 functions as the Nucleophile in the catalytic mechanism. Catalysis depends on residues H192 and E194. Residues 219–417 form the GMPS ATP-PPase domain; it reads WTTEAFVEES…IGLPEEIVRR (199 aa). Residue 246 to 252 coordinates ATP; it reads SGGVDSS.

Homodimer.

The catalysed reaction is XMP + L-glutamine + ATP + H2O = GMP + L-glutamate + AMP + diphosphate + 2 H(+). It participates in purine metabolism; GMP biosynthesis; GMP from XMP (L-Gln route): step 1/1. Functionally, catalyzes the synthesis of GMP from XMP. The sequence is that of GMP synthase [glutamine-hydrolyzing] from Rippkaea orientalis (strain PCC 8801 / RF-1) (Cyanothece sp. (strain PCC 8801)).